We begin with the raw amino-acid sequence, 451 residues long: NADP-specific glutamate dehydrogenase (451 aa).

Residue Lys113 is part of the active site. Ser252 bears the Phosphoserine mark.

The protein belongs to the Glu/Leu/Phe/Val dehydrogenases family. In terms of assembly, homohexamer.

It carries out the reaction L-glutamate + NADP(+) + H2O = 2-oxoglutarate + NH4(+) + NADPH + H(+). The sequence is that of NADP-specific glutamate dehydrogenase (gdh1) from Schizosaccharomyces pombe (strain 972 / ATCC 24843) (Fission yeast).